A 1006-amino-acid polypeptide reads, in one-letter code: Probable beta-galactosidase A (1006 aa).

An N-terminal signal peptide occupies residues 1–18 (MKLLSVCAIALLAAQAAG). Residues Tyr96, Asn140, Ala141, and Glu142 each coordinate substrate. N-linked (GlcNAc...) asparagine glycosylation occurs at Asn156. Substrate is bound at residue Asn199. Glu200 acts as the Proton donor in catalysis. A disulfide bridge links Cys205 with Cys206. Tyr260 provides a ligand contact to substrate. Cysteines 266 and 315 form a disulfide. The active-site Nucleophile is Glu298. Residue Tyr364 coordinates substrate. Asn373, Asn402, Asn422, Asn622, Asn760, Asn777, and Asn914 each carry an N-linked (GlcNAc...) asparagine glycan.

This sequence belongs to the glycosyl hydrolase 35 family.

Its subcellular location is the secreted. It carries out the reaction Hydrolysis of terminal non-reducing beta-D-galactose residues in beta-D-galactosides.. Cleaves beta-linked terminal galactosyl residues from gangliosides, glycoproteins, and glycosaminoglycans. The protein is Probable beta-galactosidase A (lacA) of Aspergillus fumigatus (strain CBS 144.89 / FGSC A1163 / CEA10) (Neosartorya fumigata).